The following is a 213-amino-acid chain: Small ribosomal subunit protein uS4 (213 aa).

A disordered region spans residues 16–53 (GTDLGLKSGVKPYDVKTKKSARPPGQHGVSRNKSSEYS). Over residues 44 to 53 (VSRNKSSEYS) the composition is skewed to polar residues. Residues 97–163 (SRLDNVVYRM…EKSREQLRIK (67 aa)) form the S4 RNA-binding domain.

This sequence belongs to the universal ribosomal protein uS4 family. In terms of assembly, part of the 30S ribosomal subunit. Contacts protein S5. The interaction surface between S4 and S5 is involved in control of translational fidelity.

Functionally, one of the primary rRNA binding proteins, it binds directly to 16S rRNA where it nucleates assembly of the body of the 30S subunit. In terms of biological role, with S5 and S12 plays an important role in translational accuracy. The sequence is that of Small ribosomal subunit protein uS4 from Psychrobacter cryohalolentis (strain ATCC BAA-1226 / DSM 17306 / VKM B-2378 / K5).